We begin with the raw amino-acid sequence, 533 residues long: GMP synthase [glutamine-hydrolyzing] (533 aa).

In terms of domain architecture, Glutamine amidotransferase type-1 spans 12–206; the sequence is TILVLDFGSQ…AVGICGAEQK (195 aa). Residue Cys-88 is the Nucleophile of the active site. Catalysis depends on residues His-180 and Glu-182. Residues 207-408 form the GMPS ATP-PPase domain; it reads WTMAEFIGQE…LGISPELVGR (202 aa). 235–241 is a binding site for ATP; sequence SGGVDST. XMP is bound by residues Arg-308, Asp-470, Lys-525, and Glu-531.

As to quaternary structure, homodimer. It depends on Mg(2+) as a cofactor.

The protein localises to the cytoplasm. The protein resides in the cytosol. It catalyses the reaction XMP + L-glutamine + ATP + H2O = GMP + L-glutamate + AMP + diphosphate + 2 H(+). The protein operates within purine metabolism; GMP biosynthesis; GMP from XMP (L-Gln route): step 1/1. Its function is as follows. Catalyzes the conversion of xanthine monophosphate (XMP) to GMP in the presence of glutamine and ATP through an adenyl-XMP intermediate. This chain is GMP synthase [glutamine-hydrolyzing] (gua1), found in Emericella nidulans (strain FGSC A4 / ATCC 38163 / CBS 112.46 / NRRL 194 / M139) (Aspergillus nidulans).